The sequence spans 472 residues: tRNA-2-methylthio-N(6)-dimethylallyladenosine synthase (472 aa).

The disordered stretch occupies residues 1–24 (MTGTPDVFPPATPGGTPLVALPAG). The MTTase N-terminal domain occupies 33-150 (GKLYIKTHGC…LPELIRARRE (118 aa)). [4Fe-4S] cluster contacts are provided by cysteine 42, cysteine 79, cysteine 113, cysteine 187, cysteine 191, and cysteine 194. The 235-residue stretch at 173-407 (RADGASAFVS…RINAHAAGIS (235 aa)) folds into the Radical SAM core domain. One can recognise a TRAM domain in the interval 408-471 (EKMVGTVQTV…TNSLRARVVA (64 aa)).

The protein belongs to the methylthiotransferase family. MiaB subfamily. In terms of assembly, monomer. The cofactor is [4Fe-4S] cluster.

Its subcellular location is the cytoplasm. It catalyses the reaction N(6)-dimethylallyladenosine(37) in tRNA + (sulfur carrier)-SH + AH2 + 2 S-adenosyl-L-methionine = 2-methylsulfanyl-N(6)-dimethylallyladenosine(37) in tRNA + (sulfur carrier)-H + 5'-deoxyadenosine + L-methionine + A + S-adenosyl-L-homocysteine + 2 H(+). Catalyzes the methylthiolation of N6-(dimethylallyl)adenosine (i(6)A), leading to the formation of 2-methylthio-N6-(dimethylallyl)adenosine (ms(2)i(6)A) at position 37 in tRNAs that read codons beginning with uridine. In Stenotrophomonas maltophilia (strain R551-3), this protein is tRNA-2-methylthio-N(6)-dimethylallyladenosine synthase.